A 606-amino-acid chain; its full sequence is Endo-beta-1,4-xylanase Xyn10C (606 aa).

The N-terminal stretch at 1-19 (MKKIQQLLMLSLISSTLIA) is a signal peptide. Cysteine 20 is lipidated: N-palmitoyl cysteine. A lipid anchor (S-diacylglycerol cysteine) is attached at cysteine 20. Residues 23-64 (GGGGGSTPTTSSSPQSSSPASTPSSASSSSIISSSSLSSSLS) form a disordered region. Residues 29–64 (TPTTSSSPQSSSPASTPSSASSSSIISSSSLSSSLS) are compositionally biased toward low complexity. The CBM15 domain occupies 91–242 (GNVVIEVDMA…KSVTITLAQE (152 aa)). A carbohydrate contacts are provided by asparagine 106 and glutamine 171. A disulfide bridge connects residues cysteine 183 and cysteine 200. Glutamine 217 serves as a coordination point for a carbohydrate. Positions 245 to 596 (SANVDHLRDL…KPALRGFADA (352 aa)) constitute a GH10 domain. Residues 296 to 299 (NIMK), histidine 332, and asparagine 384 each bind substrate. The active-site Proton donor is the glutamate 385. The Nucleophile role is filled by glutamate 497. Substrate is bound at residue tryptophan 552.

The protein belongs to the glycosyl hydrolase 10 (cellulase F) family.

It is found in the cell outer membrane. The catalysed reaction is Endohydrolysis of (1-&gt;4)-beta-D-xylosidic linkages in xylans.. The protein operates within glycan degradation; xylan degradation. Its function is as follows. Endo-acting xylanase which specifically cleaves internal linkages on the xylan backbone, releasing xylooligosaccharides. Is able to hydrolyze oat spelt xylan, the arabinoxylans from wheat and rye, and glucuronoxylan. Also displays very low activity against xylooligosaccharides. During the xylan degradation process, Xyn10C may act on the soluble xylans and long xylooligosaccharides products released by the secreted xylanases Xyn11A, Xyn11B and Xyn10A. The sequence is that of Endo-beta-1,4-xylanase Xyn10C (xyn10C) from Cellvibrio japonicus (Pseudomonas fluorescens subsp. cellulosa).